A 249-amino-acid polypeptide reads, in one-letter code: Isoprenyl transferase 1 (249 aa).

Aspartate 30 is a catalytic residue. Position 30 (aspartate 30) interacts with Mg(2+). Substrate-binding positions include 31 to 34, tryptophan 35, arginine 43, histidine 47, and 75 to 77; these read GNGR and STE. Asparagine 78 acts as the Proton acceptor in catalysis. Residues tryptophan 79, arginine 81, arginine 198, and 204 to 206 contribute to the substrate site; that span reads RMS. Glutamate 217 is a binding site for Mg(2+).

This sequence belongs to the UPP synthase family. As to quaternary structure, homodimer. Requires Mg(2+) as cofactor.

Functionally, catalyzes the condensation of isopentenyl diphosphate (IPP) with allylic pyrophosphates generating different type of terpenoids. This is Isoprenyl transferase 1 from Tropheryma whipplei (strain Twist) (Whipple's bacillus).